Consider the following 735-residue polypeptide: MIP-related peptides (735 aa).

A signal peptide spans 1-20; the sequence is MCTRPGLAALLVLMTSCASS. A propeptide spanning residues 21–135 is cleaved from the precursor; the sequence is FSRADTQSAS…EDSDTKVDTR (115 aa). The segment covering 33-65 has biased composition (low complexity); that stretch reads ALSAASADAQAARQQQEQHLVAQQQQQQQQQQQ. Disordered regions lie at residues 33–212 and 229–251; these read ALSA…FGKK and FGKKSSGESAGDSGYISVASRGS. Polar residues-rich tracts occupy residues 66–76 and 101–125; these read HSNNNEPQQRA and PVSQPDLSPDFSNPMGSSLSQSGTP. Phenylalanine amide is present on residues Phe142, Phe153, and Phe164. The span at 142–159 shows a compositional bias: basic residues; the sequence is FGKKRGQAPRFFGKKRAM. The propeptide occupies 168-184; it reads SSEFPTSNSEQLALDTR. Position 190 is a phenylalanine amide (Phe190). A propeptide spanning residues 194-203 is cleaved from the precursor; sequence SFPESNREQR. Positions 194 to 204 are enriched in basic and acidic residues; the sequence is SFPESNREQRG. Phenylalanine amide is present on residues Phe209 and Phe229. Positions 214 to 229 are cleaved as a propeptide — linker peptide; it reads FDENVDIDERAAPRFF. A propeptide spanning residues 233–249 is cleaved from the precursor; the sequence is SSGESAGDSGYISVASR. Phe255 carries the post-translational modification Phenylalanine amide. Positions 259–267 are cleaved as a propeptide — linker peptide; the sequence is QDDDIMIAA. Phe274 bears the Phenylalanine amide mark. The propeptide at 279–287 is linker peptide; the sequence is SDDNVALDL. Phe294 carries the post-translational modification Phenylalanine amide. A propeptide spanning residues 298–311 is cleaved from the precursor; it reads QSSDLDDEISVALR. Phe317 bears the Phenylalanine amide mark. The propeptide occupies 321-332; the sequence is RADDEDILLGER. A Phenylalanine amide modification is found at Phe338. Residues 342 to 353 constitute a propeptide that is removed on maturation; sequence RANDENISFSLR. Disordered regions lie at residues 352–373 and 381–400; these read LRGSPRFFGKKRSDESDDDNIG and RFFGKKRSDETDDENIGLMA. Phe359 bears the Phenylalanine amide mark. Positions 363 to 377 are excised as a propeptide; sequence RSDESDDDNIGLVAR. Phe383 carries the phenylalanine amide modification. Residues 387–401 constitute a propeptide that is removed on maturation; that stretch reads RSDETDDENIGLMAR. Position 407 is a phenylalanine amide (Phe407). Residues 412–426 constitute a propeptide, linker peptide; that stretch reads SDGLDDGGNIIDVAT. Positions 430-464 are disordered; the sequence is PRFFGKKRSNSDSSDKSSDSALSSSESGRQTRQAP. Position 433 is a phenylalanine amide (Phe433). A propeptide spanning residues 437-461 is cleaved from the precursor; that stretch reads RSNSDSSDKSSDSALSSSESGRQTR. Residues 438-447 are compositionally biased toward basic and acidic residues; the sequence is SNSDSSDKSS. At Gln462 the chain carries Pyrrolidone carboxylic acid. Position 467 is a phenylalanine amide (Phe467). A propeptide spanning residues 471–493 is cleaved from the precursor; sequence YVDEHHVSKRAAATAFPLIIEAR. Position 494 is a pyrrolidone carboxylic acid (Gln494). Phe499 bears the Phenylalanine amide mark. Residues 503–509 constitute a propeptide that is removed on maturation; it reads EYRYPPR. Residue Ile515 is modified to Isoleucine amide. Positions 519–546 are excised as a propeptide; that stretch reads FSLYRSPGKYSLSSPYMSAKEFKETFRR. Position 552 is a methionine amide (Met552). The propeptide occupies 556–585; sequence TAELNEEGSDDFTNDDTDDENEYDETVLFK. Valine amide is present on Val592. The residue at position 601 (Leu601) is a Leucine amide. The residue at position 610 (Ile610) is an Isoleucine amide. Val619 carries the post-translational modification Valine amide. Ile628 bears the Isoleucine amide mark. A propeptide spans 632-661 (linker peptide); that stretch reads DLDWYQKALCAEADILELDDCADFLGNDDV. At Gln664 the chain carries Pyrrolidone carboxylic acid. Residue Ile669 is modified to Isoleucine amide. A propeptide spans 674 to 705 (linker peptide); the sequence is GEDVSERDYAQLLEALSRLQAIKQIKARIQNE. Val714 carries the post-translational modification Valine amide. Residues 715–735 constitute a propeptide that is removed on maturation; it reads GRRSEYNLGPFDEFVDESMER.

As to expression, expressed in the CNS and peripheral tissues (the digestive tract, vasculature, and the reproductive organs).

Its subcellular location is the secreted. Functionally, has some structural and functional features similar to vertebrate opioid peptides. AMRPs are inhibitory on Aplysia esophagus, penis retractor muscle, and body wall muscle. The polypeptide is MIP-related peptides (MRP) (Aplysia californica (California sea hare)).